The following is an 854-amino-acid chain: Fibronectin-binding protein PlpA (854 aa).

Low complexity predominate over residues 1-24 (MDNNQNNFNQPGQQGFDQYQQQSG). Residues 1 to 33 (MDNNQNNFNQPGQQGFDQYQQQSGALVSYGYDA) form a disordered region. The interval 91–109 (QYNQQQNQGYEQQYDEYGN) is fibronectin-binding. 4 disordered regions span residues 247–327 (YEQE…LEAP), 411–434 (SSNN…EDSN), 743–766 (TINP…QLPP), and 835–854 (IQPS…YNNR). A compositionally biased stretch (basic and acidic residues) spans 258–267 (EPAHEQDLRE). Composition is skewed to polar residues over residues 311–320 (TVNQPDQTPI) and 411–428 (SSNN…TSNE). Residues 384–622 (NLEEIQKVKL…SSFQKALSEV (239 aa)) adopt a coiled-coil conformation. Over residues 746–764 (PPQPQPQALPQPHPQPQQL) the composition is skewed to pro residues.

Its subcellular location is the cell membrane. Binds immobilized fibronectin, specifically the gelatin/heparin-binding domain. The protein is Fibronectin-binding protein PlpA (plpA) of Mycoplasmoides gallisepticum (strain R(low / passage 15 / clone 2)) (Mycoplasma gallisepticum).